Consider the following 441-residue polypeptide: Double-stranded RNA-binding protein 1 (441 aa).

DRBM domains lie at 1–71, 86–155, and 169–237; these read MYKS…HLSS, SYKS…SLPQ, and SYKN…HFED. The tract at residues 69–88 is disordered; sequence LSSLPLPPPPPPSENQSSYK.

Functionally, binds double-stranded RNA. This Oryza sativa subsp. japonica (Rice) protein is Double-stranded RNA-binding protein 1 (DRB1).